The following is a 215-amino-acid chain: Cytochrome b6 (215 aa).

Residues 32–52 form a helical membrane-spanning segment; sequence IFYCFGGITLTCFLIQVATGF. Cys-35 serves as a coordination point for heme c. Residues His-86 and His-100 each coordinate heme b. 3 helical membrane passes run 90–110, 116–136, and 186–206; these read ASMM…TGGF, LTWV…VTGY, and LHTF…FLMI. The heme b site is built by His-187 and His-202.

Belongs to the cytochrome b family. PetB subfamily. In terms of assembly, the 4 large subunits of the cytochrome b6-f complex are cytochrome b6, subunit IV (17 kDa polypeptide, PetD), cytochrome f and the Rieske protein, while the 4 small subunits are PetG, PetL, PetM and PetN. The complex functions as a dimer. Requires heme b as cofactor. Heme c serves as cofactor.

It is found in the plastid. Its subcellular location is the chloroplast thylakoid membrane. Component of the cytochrome b6-f complex, which mediates electron transfer between photosystem II (PSII) and photosystem I (PSI), cyclic electron flow around PSI, and state transitions. In Nephroselmis olivacea (Green alga), this protein is Cytochrome b6.